The chain runs to 363 residues: Protein-arginine kinase (363 aa).

The 231-residue stretch at 24–254 (IVLSSRIRLA…AQLIEQERSA (231 aa)) folds into the Phosphagen kinase C-terminal domain. 27–31 (SSRIR) is an ATP binding site. Phosphoarginine; by autocatalysis is present on residues Arg29, Arg40, and Arg86. ATP contacts are provided by residues His92, Arg125, and 176-180 (RASVM). Arg190 is modified (phosphoarginine; by autocatalysis). Residue 207-212 (RGIYGE) coordinates ATP. Arg255, Arg269, and Arg272 each carry phosphoarginine; by autocatalysis. The RDXXRA motif of the pArg binding pocket involved in allosteric regulation motif lies at 337–342 (RDIRRA). Arg346 carries the phosphoarginine; by autocatalysis modification.

This sequence belongs to the ATP:guanido phosphotransferase family. As to quaternary structure, interacts with CtsR in its autophosphorylated form. Interacts with McsA in nonstressed as well as in heat-stressed cells, whereas strongly interacts with ClpC only in nonstressed cells. Post-translationally, autophosphorylated on Arg residues. Phosphorylation on Arg-40 and Arg-86 are up-regulated upon stress conditions.

It is found in the cytoplasm. It catalyses the reaction L-arginyl-[protein] + ATP = N(omega)-phospho-L-arginyl-[protein] + ADP + H(+). Appears to be allosterically activated by the binding of pArg-containing polypeptides to the pArg-binding pocket localized in the C-terminal domain of McsB. The McsB kinase is inhibited in nonstressed cells by direct interaction with ClpC; upon heat exposure, the interaction of McsB with ClpC is dramatically decreased, leading to McsB release and activation during heat stress. Its kinase activity is counteracted by the protein-arginine-phosphatase YwlE in vivo. Requires McsA for full kinase activity. Catalyzes the specific phosphorylation of arginine residues in a large number of proteins. Is part of the bacterial stress response system, where it is involved in regulating the global heat shock repressor CtsR; phosphorylates arginine residues in the winged helix-turn-helix domain of CtsR, thereby preventing its binding to DNA and consequently inducing the expression of repressed genes. The transcriptional repressor HrcA, the chaperone GroEL, the unfoldase ClpC, together with several ribosomal subunits, represent other physiological targets of McsB under stress conditions. Protein arginine phosphorylation has a physiologically important role and is involved in the regulation of many critical cellular processes, such as protein homeostasis, motility, competence, and stringent and stress responses, by regulating gene expression and protein activity. Functions as an adapter whose kinase activity is required for ClpCP-mediated degradation of CtsR during heat stress. Is required for the delocalization of competence proteins from the cell poles, probably via a role in the degradation of anchor proteins. This chain is Protein-arginine kinase, found in Bacillus subtilis (strain 168).